The sequence spans 385 residues: Tryptophan--tRNA ligase (385 aa).

A 'HIGH' region motif is present at residues 82–90 (PSGPMHIGH). The short motif at 253–257 (KMSAS) is the 'KMSKS' region element.

Belongs to the class-I aminoacyl-tRNA synthetase family.

The protein resides in the cytoplasm. The enzyme catalyses tRNA(Trp) + L-tryptophan + ATP = L-tryptophyl-tRNA(Trp) + AMP + diphosphate + H(+). The protein is Tryptophan--tRNA ligase of Pyrococcus furiosus (strain ATCC 43587 / DSM 3638 / JCM 8422 / Vc1).